A 262-amino-acid chain; its full sequence is Pyridoxine 5'-phosphate synthase (262 aa).

N6 lines the 3-amino-2-oxopropyl phosphate pocket. 8-9 provides a ligand contact to 1-deoxy-D-xylulose 5-phosphate; the sequence is DH. R17 provides a ligand contact to 3-amino-2-oxopropyl phosphate. The Proton acceptor role is filled by H43. 2 residues coordinate 1-deoxy-D-xylulose 5-phosphate: R45 and H50. Residue E70 is the Proton acceptor of the active site. T102 contacts 1-deoxy-D-xylulose 5-phosphate. The active-site Proton donor is the H215. Residues G216 and 237-238 contribute to the 3-amino-2-oxopropyl phosphate site; that span reads GH.

The protein belongs to the PNP synthase family. Homooctamer; tetramer of dimers.

It localises to the cytoplasm. The enzyme catalyses 3-amino-2-oxopropyl phosphate + 1-deoxy-D-xylulose 5-phosphate = pyridoxine 5'-phosphate + phosphate + 2 H2O + H(+). The protein operates within cofactor biosynthesis; pyridoxine 5'-phosphate biosynthesis; pyridoxine 5'-phosphate from D-erythrose 4-phosphate: step 5/5. In terms of biological role, catalyzes the complicated ring closure reaction between the two acyclic compounds 1-deoxy-D-xylulose-5-phosphate (DXP) and 3-amino-2-oxopropyl phosphate (1-amino-acetone-3-phosphate or AAP) to form pyridoxine 5'-phosphate (PNP) and inorganic phosphate. This is Pyridoxine 5'-phosphate synthase from Helicobacter pylori (strain G27).